The primary structure comprises 662 residues: DNA ligase (662 aa).

NAD(+) contacts are provided by residues 34-38 (DYDYD), 83-84 (SI), and E113. Residue K115 is the N6-AMP-lysine intermediate of the active site. The NAD(+) site is built by R136, E172, K286, and K310. Zn(2+) is bound by residues C404, C407, C422, and C427. Residues 583-662 (RASASCQGKT…SDLLKILYPN (80 aa)) form the BRCT domain.

This sequence belongs to the NAD-dependent DNA ligase family. LigA subfamily. It depends on Mg(2+) as a cofactor. The cofactor is Mn(2+).

It catalyses the reaction NAD(+) + (deoxyribonucleotide)n-3'-hydroxyl + 5'-phospho-(deoxyribonucleotide)m = (deoxyribonucleotide)n+m + AMP + beta-nicotinamide D-nucleotide.. In terms of biological role, DNA ligase that catalyzes the formation of phosphodiester linkages between 5'-phosphoryl and 3'-hydroxyl groups in double-stranded DNA using NAD as a coenzyme and as the energy source for the reaction. It is essential for DNA replication and repair of damaged DNA. The chain is DNA ligase from Chlamydia felis (strain Fe/C-56) (Chlamydophila felis).